The sequence spans 3411 residues: Genome polyprotein (3411 aa).

Residues Met-1–Asp-104 lie on the Cytoplasmic side of the membrane. The hydrophobic; homodimerization of capsid protein C stretch occupies residues Pro-38–Leu-72. A propeptide spans Ser-102 to Gly-121 (ER anchor for the capsid protein C, removed in mature form by serine protease NS3). Residues Val-105–Val-125 traverse the membrane as a helical segment. The Extracellular portion of the chain corresponds to Arg-126–Arg-244. Asn-134 and Asn-150 each carry an N-linked (GlcNAc...) asparagine; by host glycan. A helical membrane pass occupies residues Trp-245–Ser-265. At Asn-266–Arg-270 the chain is on the cytoplasmic side. Residues Val-271 to Ser-285 traverse the membrane as a helical segment. Residues Ala-286–Leu-730 lie on the Extracellular side of the membrane. Intrachain disulfides connect Cys-288–Cys-315, Cys-345–Cys-401, Cys-345–Cys-406, Cys-359–Cys-390, Cys-377–Cys-401, Cys-377–Cys-406, Cys-467–Cys-568, and Cys-585–Cys-615. Residues Asp-383 to Gly-396 are fusion peptide. A helical membrane pass occupies residues Phe-731–Ile-751. Over Asn-752–Thr-757 the chain is Extracellular. The chain crosses the membrane as a helical span at residues Met-758–Ala-778. At Asp-779–Glu-1132 the chain is on the extracellular side. Cystine bridges form between Cys-782–Cys-793, Cys-833–Cys-921, Cys-957–Cys-1002, Cys-1058–Cys-1107, Cys-1069–Cys-1091, and Cys-1090–Cys-1094. Residues Asn-908 and Asn-986 are each glycosylated (N-linked (GlcNAc...) asparagine; by host). Residues Ile-1133–Lys-1153 form a helical membrane-spanning segment. Residues Arg-1154–Ala-1201 are Cytoplasmic-facing. A helical transmembrane segment spans residues Met-1202–Leu-1222. At Arg-1223–Pro-1287 the chain is on the lumenal side. A helical transmembrane segment spans residues Val-1288–Val-1308. Residues Leu-1309 to Ser-1355 are Cytoplasmic-facing. Residues Ile-1356 to Phe-1376 traverse the membrane as a helical segment. The Lumenal segment spans residues Gln-1377 to Glu-1378. A helical transmembrane segment spans residues Met-1379 to Ala-1399. The Cytoplasmic portion of the chain corresponds to Gly-1400 to Leu-1456. Residues Leu-1407 to Val-1446 are interacts with and activates NS3 protease. The helical intramembrane region spans Ala-1457 to Phe-1477. At His-1478 to Ala-2157 the chain is on the cytoplasmic side. A Peptidase S7 domain is found at Ser-1485–Leu-1665. Residues His-1537, Asp-1561, and Ser-1622 each act as charge relay system; for serine protease NS3 activity in the active site. A Helicase ATP-binding domain is found at Pro-1669 to Gln-1825. Residues Lys-1673–Lys-1676 form an important for RNA-binding region. Residue Phe-1682–Thr-1689 coordinates ATP. The short motif at Asp-1773–His-1776 is the DEAH box element. The region spanning Glu-1820–Tyr-1997 is the Helicase C-terminal domain. Residue Lys-1877 is modified to N6-acetyllysine; by host. The segment at Ala-1942 to Tyr-1961 is disordered. A helical transmembrane segment spans residues Met-2158 to Phe-2178. Topologically, residues Met-2179–Arg-2186 are lumenal. Residues Met-2187 to Lys-2207 constitute an intramembrane region (helical). The Lumenal segment spans residues Pro-2208–Thr-2209. A helical membrane pass occupies residues His-2210–Gly-2230. Topologically, residues Gln-2231–Ala-2241 are cytoplasmic. A helical membrane pass occupies residues Phe-2242–Leu-2262. Residues Glu-2263–Gly-2293 are Lumenal-facing. An intramembrane region (helical) is located at residues Ala-2294–Ile-2314. Residues Lys-2315–Ile-2360 are Lumenal-facing. The helical transmembrane segment at Thr-2361–Leu-2380 threads the bilayer. At Pro-2381–Val-2421 the chain is on the cytoplasmic side. The helical transmembrane segment at Leu-2422–Met-2442 threads the bilayer. Residues Cys-2443–Thr-2445 lie on the Lumenal side of the membrane. A helical membrane pass occupies residues Pro-2446–Gly-2466. Over Asn-2467–Ile-3411 the chain is Cytoplasmic. The mRNA cap 0-1 NS5-type MT domain occupies Gly-2507–Ser-2771. Ser-2562 contributes to the S-adenosyl-L-methionine binding site. Position 2562 is a phosphoserine (Ser-2562). Lys-2567 serves as the catalytic For 2'-O-MTase activity. Positions 2592, 2593, 2610, 2611, 2637, and 2638 each coordinate S-adenosyl-L-methionine. Asp-2652 functions as the For 2'-O-MTase activity in the catalytic mechanism. Position 2653 (Ile-2653) interacts with S-adenosyl-L-methionine. Residues Lys-2688 and Glu-2724 each act as for 2'-O-MTase activity in the active site. Tyr-2726 is an S-adenosyl-L-methionine binding site. The short motif at Arg-2878–Arg-2911 is the Nuclear localization signal element. Residues Glu-2945, His-2949, Cys-2954, and Cys-2957 each coordinate Zn(2+). Residues Gly-3035 to Ala-3187 enclose the RdRp catalytic domain. Zn(2+) contacts are provided by His-3222, Cys-3238, and Cys-3357.

The protein in the N-terminal section; belongs to the class I-like SAM-binding methyltransferase superfamily. mRNA cap 0-1 NS5-type methyltransferase family. Homodimer. Interacts (via N-terminus) with host EXOC1 (via C-terminus); this interaction results in EXOC1 degradation through the proteasome degradation pathway. As to quaternary structure, forms heterodimers with envelope protein E in the endoplasmic reticulum and Golgi. In terms of assembly, homodimer; in the endoplasmic reticulum and Golgi. Interacts with protein prM. Interacts with non-structural protein 1. Homodimer; Homohexamer when secreted. Interacts with envelope protein E. As to quaternary structure, interacts (via N-terminus) with serine protease NS3. In terms of assembly, forms a heterodimer with serine protease NS3. May form homooligomers. Forms a heterodimer with NS2B. Interacts with non-structural protein 2A (via N-terminus). Interacts with NS4B. Interacts with unphosphorylated RNA-directed RNA polymerase NS5; this interaction stimulates RNA-directed RNA polymerase NS5 guanylyltransferase activity. NS3 interacts with host PDCD6IP; this interaction contributes to virion release. As to quaternary structure, interacts with serine protease NS3. In terms of assembly, homodimer. Interacts with host STAT2; this interaction prevents the establishment of cellular antiviral state. Interacts with serine protease NS3. Interacts with host TRIM23; this interaction leads to NS5 ubiquitination. Specific enzymatic cleavages in vivo yield mature proteins. The nascent capsid protein C contains a C-terminal hydrophobic domain that act as a signal sequence for translocation of prM into the lumen of the ER. Mature capsid protein C is cleaved at a site upstream of this hydrophobic domain by NS3. prM is cleaved in post-Golgi vesicles by a host furin, releasing the mature small envelope protein M, and peptide pr. Non-structural protein 2A-alpha, a C-terminally truncated form of non-structural protein 2A, results from partial cleavage by NS3. Specific enzymatic cleavages in vivo yield mature proteins peptide 2K acts as a signal sequence and is removed from the N-terminus of NS4B by the host signal peptidase in the ER lumen. Signal cleavage at the 2K-4B site requires a prior NS3 protease-mediated cleavage at the 4A-2K site. Post-translationally, cleaved in post-Golgi vesicles by a host furin, releasing the mature small envelope protein M, and peptide pr. This cleavage is incomplete as up to 30% of viral particles still carry uncleaved prM. In terms of processing, N-glycosylated. N-glycosylated. The excreted form is glycosylated and this is required for efficient secretion of the protein from infected cells. Post-translationally, polyubiquitinated; ubiquitination is probably mediated by host TRIM23 and is prerequisite for NS5-STAT2 interaction. NS5 is not ISGylated or sumoylated. In terms of processing, phosphorylated on serines residues. This phosphorylation may trigger NS5 nuclear localization. Acetylated by host KAT5. Acetylation modulates NS3 RNA-binding and -unwinding activities and plays an important role for viral replication.

Its subcellular location is the virion. The protein localises to the host nucleus. It localises to the host cytoplasm. The protein resides in the host perinuclear region. It is found in the secreted. Its subcellular location is the virion membrane. The protein localises to the host endoplasmic reticulum membrane. It carries out the reaction Selective hydrolysis of -Xaa-Xaa-|-Yaa- bonds in which each of the Xaa can be either Arg or Lys and Yaa can be either Ser or Ala.. The catalysed reaction is RNA(n) + a ribonucleoside 5'-triphosphate = RNA(n+1) + diphosphate. It catalyses the reaction a ribonucleoside 5'-triphosphate + H2O = a ribonucleoside 5'-diphosphate + phosphate + H(+). The enzyme catalyses ATP + H2O = ADP + phosphate + H(+). It carries out the reaction a 5'-end (5'-triphosphoguanosine)-ribonucleoside in mRNA + S-adenosyl-L-methionine = a 5'-end (N(7)-methyl 5'-triphosphoguanosine)-ribonucleoside in mRNA + S-adenosyl-L-homocysteine. The catalysed reaction is a 5'-end (N(7)-methyl 5'-triphosphoguanosine)-ribonucleoside in mRNA + S-adenosyl-L-methionine = a 5'-end (N(7)-methyl 5'-triphosphoguanosine)-(2'-O-methyl-ribonucleoside) in mRNA + S-adenosyl-L-homocysteine + H(+). In terms of biological role, plays a role in virus budding by binding to the cell membrane and gathering the viral RNA into a nucleocapsid that forms the core of a mature virus particle. During virus entry, may induce genome penetration into the host cytoplasm after hemifusion induced by the surface proteins. Can migrate to the cell nucleus where it modulates host functions. Functionally, inhibits RNA silencing by interfering with host Dicer. Prevents premature fusion activity of envelope proteins in trans-Golgi by binding to envelope protein E at pH6.0. After virion release in extracellular space, gets dissociated from E dimers. Its function is as follows. Acts as a chaperone for envelope protein E during intracellular virion assembly by masking and inactivating envelope protein E fusion peptide. prM is the only viral peptide matured by host furin in the trans-Golgi network probably to avoid catastrophic activation of the viral fusion activity in acidic Golgi compartment prior to virion release. prM-E cleavage is inefficient, and many virions are only partially matured. These uncleaved prM would play a role in immune evasion. In terms of biological role, may play a role in virus budding. Exerts cytotoxic effects by activating a mitochondrial apoptotic pathway through M ectodomain. May display a viroporin activity. Functionally, binds to host cell surface receptor and mediates fusion between viral and cellular membranes. Envelope protein is synthesized in the endoplasmic reticulum in the form of heterodimer with protein prM. They play a role in virion budding in the ER, and the newly formed immature particle is covered with 60 spikes composed of heterodimer between precursor prM and envelope protein E. The virion is transported to the Golgi apparatus where the low pH causes dissociation of PrM-E heterodimers and formation of E homodimers. prM-E cleavage is inefficient, and many virions are only partially matured. These uncleaved prM would play a role in immune evasion. Involved in immune evasion, pathogenesis and viral replication. Once cleaved off the polyprotein, is targeted to three destinations: the viral replication cycle, the plasma membrane and the extracellular compartment. Essential for viral replication. Required for formation of the replication complex and recruitment of other non-structural proteins to the ER-derived membrane structures. Excreted as a hexameric lipoparticle that plays a role against host immune response. Antagonizing the complement function. Binds to the host macrophages and dendritic cells. Inhibits signal transduction originating from Toll-like receptor 3 (TLR3). Its function is as follows. Component of the viral RNA replication complex that functions in virion assembly and antagonizes the host immune response. In terms of biological role, required cofactor for the serine protease function of NS3. May have membrane-destabilizing activity and form viroporins. Functionally, displays three enzymatic activities: serine protease, NTPase and RNA helicase. NS3 serine protease, in association with NS2B, performs its autocleavage and cleaves the polyprotein at dibasic sites in the cytoplasm: C-prM, NS2A-NS2B, NS2B-NS3, NS3-NS4A, NS4A-2K and NS4B-NS5. NS3 RNA helicase binds RNA and unwinds dsRNA in the 3' to 5' direction. Also plays a role in virus assembly. Regulates the ATPase activity of the NS3 helicase activity. NS4A allows NS3 helicase to conserve energy during unwinding. Its function is as follows. Functions as a signal peptide for NS4B and is required for the interferon antagonism activity of the latter. In terms of biological role, induces the formation of ER-derived membrane vesicles where the viral replication takes place. Inhibits interferon (IFN)-induced host STAT1 phosphorylation and nuclear translocation, thereby preventing the establishment of cellular antiviral state by blocking the IFN-alpha/beta pathway. Functionally, replicates the viral (+) and (-) RNA genome, and performs the capping of genomes in the cytoplasm. NS5 methylates viral RNA cap at guanine N-7 and ribose 2'-O positions. Besides its role in RNA genome replication, also prevents the establishment of cellular antiviral state by blocking the interferon-alpha/beta (IFN-alpha/beta) signaling pathway. IFN-I induces binding of NS5 to host IFN-activated transcription factor STAT2, preventing its transcriptional activity. Host TRIM23 is the E3 ligase that interacts with and polyubiquitinates NS5 to promote its binding to STAT2 and trigger IFN-I signaling inhibition. In Yellow fever virus (strain French neurotropic vaccine FNV) (YFV), this protein is Genome polyprotein.